The primary structure comprises 423 residues: Histone deacetylase 14, chloroplastic (423 aa).

Residues 1-44 (MSMALIVRPFFVPGSAGISGSRNICKKNQWRKYLLKPSGSSINC) constitute a chloroplast transit peptide. Residues 62–392 (DARLIYSVSA…FRALLGEDSL (331 aa)) form a histone deacetylase region. Histidine 202 (proton donor/acceptor) is an active-site residue. Positions 239, 241, and 326 each coordinate Zn(2+).

It belongs to the histone deacetylase family. As to quaternary structure, interacts with PP2A2. It depends on Zn(2+) as a cofactor. As to expression, expressed in stems, leaves, flowers, siliques and mature seeds.

Its subcellular location is the nucleus. The protein localises to the cytoplasm. It localises to the plastid. It is found in the chloroplast stroma. The protein resides in the mitochondrion. The enzyme catalyses N-acetylserotonin + H2O = serotonin + acetate. The catalysed reaction is N-acetyltyramine + H2O = tyramine + acetate. It carries out the reaction N-acetyltryptamine + H2O = tryptamine + acetate. It catalyses the reaction melatonin + H2O = 5-methoxytryptamine + acetate. Its activity is inhibited by trichostatin A (TSA), a known histone deacetylase inhibitor. Its function is as follows. Regulates lysine acetylation levels of plastid proteins related to photosynthesis. Involved in the regulation of the activation state of RuBisCO, which is controlled by lysine acetylation of RuBisCO activase under low-light conditions. Associates with alpha- and beta-tubulins and deacetylate alpha-tubulin. Does not seem to be required for the cellular patterning in the root epidermis. Involved in the regulation of melatonin biosynthesis by catalyzing the deacetylation of N-acetylserotonin to produce serotonin. N-acetylserotonin is methylated by acetylserotonin O-methyltransferase (ASMT) to produce melatonin (N-acetyl-5-methoxytryptamine). Deacetylates melatonin to produce 5-methoxytryptamine. In vitro, deacetylates N-acetyltyramine and N-acetyltryptamine to produce tyramine and tryptamine, respectively. The protein is Histone deacetylase 14, chloroplastic of Arabidopsis thaliana (Mouse-ear cress).